Here is a 423-residue protein sequence, read N- to C-terminus: NADP-specific glutamate dehydrogenase (423 aa).

Residue Lys112 is part of the active site.

Belongs to the Glu/Leu/Phe/Val dehydrogenases family. As to quaternary structure, homohexamer.

It catalyses the reaction L-glutamate + NADP(+) + H2O = 2-oxoglutarate + NH4(+) + NADPH + H(+). In Saccharolobus shibatae (strain ATCC 51178 / DSM 5389 / JCM 8931 / NBRC 15437 / B12) (Sulfolobus shibatae), this protein is NADP-specific glutamate dehydrogenase (gdhA).